A 257-amino-acid polypeptide reads, in one-letter code: Pantothenate synthetase (257 aa).

29–36 contributes to the ATP binding site; the sequence is MGNLHAGH. H36 acts as the Proton donor in catalysis. Q60 serves as a coordination point for (R)-pantoate. Position 60 (Q60) interacts with beta-alanine. An ATP-binding site is contributed by 145 to 148; the sequence is GEKD. Q151 is a (R)-pantoate binding site. ATP-binding positions include V174 and 182–185; that span reads LSSR.

The protein belongs to the pantothenate synthetase family. In terms of assembly, homodimer.

It is found in the cytoplasm. The catalysed reaction is (R)-pantoate + beta-alanine + ATP = (R)-pantothenate + AMP + diphosphate + H(+). It functions in the pathway cofactor biosynthesis; (R)-pantothenate biosynthesis; (R)-pantothenate from (R)-pantoate and beta-alanine: step 1/1. Functionally, catalyzes the condensation of pantoate with beta-alanine in an ATP-dependent reaction via a pantoyl-adenylate intermediate. This Coxiella burnetii (strain CbuK_Q154) (Coxiella burnetii (strain Q154)) protein is Pantothenate synthetase.